The following is a 365-amino-acid chain: UDP-N-acetylglucosamine--N-acetylmuramyl-(pentapeptide) pyrophosphoryl-undecaprenol N-acetylglucosamine transferase (365 aa).

UDP-N-acetyl-alpha-D-glucosamine is bound by residues 17-19 (TGG), Asn-129, Arg-167, Ser-194, Ile-250, 269-274 (ALTVSE), and Gln-295.

Belongs to the glycosyltransferase 28 family. MurG subfamily.

It localises to the cell inner membrane. It carries out the reaction di-trans,octa-cis-undecaprenyl diphospho-N-acetyl-alpha-D-muramoyl-L-alanyl-D-glutamyl-meso-2,6-diaminopimeloyl-D-alanyl-D-alanine + UDP-N-acetyl-alpha-D-glucosamine = di-trans,octa-cis-undecaprenyl diphospho-[N-acetyl-alpha-D-glucosaminyl-(1-&gt;4)]-N-acetyl-alpha-D-muramoyl-L-alanyl-D-glutamyl-meso-2,6-diaminopimeloyl-D-alanyl-D-alanine + UDP + H(+). It participates in cell wall biogenesis; peptidoglycan biosynthesis. Cell wall formation. Catalyzes the transfer of a GlcNAc subunit on undecaprenyl-pyrophosphoryl-MurNAc-pentapeptide (lipid intermediate I) to form undecaprenyl-pyrophosphoryl-MurNAc-(pentapeptide)GlcNAc (lipid intermediate II). This Shewanella violacea (strain JCM 10179 / CIP 106290 / LMG 19151 / DSS12) protein is UDP-N-acetylglucosamine--N-acetylmuramyl-(pentapeptide) pyrophosphoryl-undecaprenol N-acetylglucosamine transferase.